Here is an 89-residue protein sequence, read N- to C-terminus: MNLSLILFLIGILGFVLNRKNIILMLISIEIILLSVTFLILISSLNFDDILGQTFAIYIITIAGAESAIGLGILVAFYRLRGSIAIEYK.

Transmembrane regions (helical) follow at residues 1-21 (MNLSLILFLIGILGFVLNRKN), 22-42 (IILMLISIEIILLSVTFLILI), and 55-75 (FAIYIITIAGAESAIGLGILV).

This sequence belongs to the complex I subunit 4L family.

It is found in the mitochondrion membrane. It catalyses the reaction a ubiquinone + NADH + 5 H(+)(in) = a ubiquinol + NAD(+) + 4 H(+)(out). Its function is as follows. Core subunit of the mitochondrial membrane respiratory chain NADH dehydrogenase (Complex I) that is believed to belong to the minimal assembly required for catalysis. Complex I functions in the transfer of electrons from NADH to the respiratory chain. The immediate electron acceptor for the enzyme is believed to be ubiquinone. The protein is NADH-ubiquinone oxidoreductase chain 4L (ND4L) of Trichophyton rubrum (Athlete's foot fungus).